Consider the following 994-residue polypeptide: MKSSGSARATRRNAVSSSSAPAHAEPPARRAAKSARKLDGAAARPLAPTNAASAKPQGRTREDKDRPLFEDIRYLGRLLGDVVREQEGDAVFDVVETIRQTAVKFRREDDKAAAQTLEKMLRKLTPEQTVSVVRAFSYFSHLANIAEDRHHNRRRRIHALAGSAAQAGTVAYALDKLKQAGDASSKTIKQFFEGALIVPVLTAHPTEVQRKSILDAQHDIARLLAERDQPLTARELAHNEALLRARVTTLWQTRMLRDARLTVADEIENALSYYRATFLDELPALYADIEEALAEHGLRARVPAFFQMGSWIGGDRDGNPNVTAATLDEAISRQAAVIFEHYLEQVHKLGAELSVSNLLVGASDALKALAAASPDQSPHRVDEPYRRALIGVYTRLAASARVRLGEGTVPVRSAGRGAAPVRATPYADAEEFAADLRVLTDSLALHHGESLATPRLAPLMRAAEVFGFHLASIDLRQSSDIHEAVVAELLARGGVEADYAALPEADKLRVLLAALADPRPLRSPYLDYSDLAKSELGVLERAHAIRAQFGARAVRNYIISHTETVSDLVEVLLLQKETGLFEGTLGTPHANARNGLMVIPLFETIADLRNASDIMRAFFALPGVGELLAHQGHEQEVMLGYSDSNKDGGFLTSNWELYRAELALVDLFDERGIKLRLFHGRGGTVGRGGGPTYQAILSQPPGTVNGQIRLTEQGEVIASKFANPEIGRRNLETVVAATLEATLAPHSNAPKQLPAFEAAMQTLSDAAMASYRALVYETPGFTDYFFSSTPITEIAELNIGSRPASRKLQDPKNRKIEDLRAIPWGFSWGQCRLLLTGWYGFGSAVAAYLDGAPDAAERGKRVALLKKMNKTWPFFANLLSNMDMVLAKTDLAVASRYAQLVADKKLRKHVFERIVAEWHRTADALAEITGAHARLAANPLLARSIKNRFPYLDPLNHLQVELIKRHRAGDTNARLRRGIHLTINGIAAGLRNTG.

The tract at residues 1-66 (MKSSGSARAT…QGRTREDKDR (66 aa)) is disordered. 2 stretches are compositionally biased toward low complexity: residues 14-25 (AVSSSSAPAHAE) and 41-54 (AAAR…AASA). Catalysis depends on residues H204 and K646.

It belongs to the PEPCase type 1 family. Mg(2+) is required as a cofactor.

It carries out the reaction oxaloacetate + phosphate = phosphoenolpyruvate + hydrogencarbonate. In terms of biological role, forms oxaloacetate, a four-carbon dicarboxylic acid source for the tricarboxylic acid cycle. This is Phosphoenolpyruvate carboxylase from Burkholderia pseudomallei (strain 668).